The chain runs to 1079 residues: Translation initiation factor IF-2 (1079 aa).

Basic and acidic residues-rich tracts occupy residues 52–65, 75–90, and 102–134; these read VQAQ…KEGN, RDGD…KAPE, and APER…KEPQ. Residues 52–488 form a disordered region; the sequence is VQAQRDGGAR…RGKKDVRPAA (437 aa). Over residues 150-184 the composition is skewed to low complexity; sequence APVAKVVEAAPAETPAPEAPAVKATVTAEAAPAKT. Over residues 185-194 the composition is skewed to basic and acidic residues; it reads VEPESERPQA. The span at 276–291 shows a compositional bias: low complexity; it reads AAVAQQQMQQQAAQQQ. The segment covering 306–327 has biased composition (basic and acidic residues); that stretch reads GGYRPEGQREGGYRPEGQREGG. 2 stretches are compositionally biased toward low complexity: residues 348 to 370 and 380 to 398; these read EGGY…GPRP and PGAP…APRP. A compositionally biased stretch (gly residues) spans 419-429; it reads PRPGGFGGAPG. A compositionally biased stretch (basic and acidic residues) spans 461 to 471; sequence PRGRSDDDVMR. The segment covering 473-482 has biased composition (basic residues); that stretch reads PRGRGKRGKK. A tr-type G domain is found at 578–745; sequence TRPPVVTIMG…LIAIQAEILE (168 aa). Residues 587-594 are G1; the sequence is GHVDHGKT. 587–594 provides a ligand contact to GTP; that stretch reads GHVDHGKT. The segment at 612–616 is G2; the sequence is GITQH. Positions 633 to 636 are G3; that stretch reads DTPG. GTP is bound by residues 633–637 and 687–690; these read DTPGH and NKMD. The interval 687–690 is G4; the sequence is NKMD. A G5 region spans residues 723–725; sequence SAK.

The protein belongs to the TRAFAC class translation factor GTPase superfamily. Classic translation factor GTPase family. IF-2 subfamily.

The protein localises to the cytoplasm. In terms of biological role, one of the essential components for the initiation of protein synthesis. Protects formylmethionyl-tRNA from spontaneous hydrolysis and promotes its binding to the 30S ribosomal subunits. Also involved in the hydrolysis of GTP during the formation of the 70S ribosomal complex. This is Translation initiation factor IF-2 from Nitratidesulfovibrio vulgaris (strain ATCC 29579 / DSM 644 / CCUG 34227 / NCIMB 8303 / VKM B-1760 / Hildenborough) (Desulfovibrio vulgaris).